Consider the following 249-residue polypeptide: 15,16-dihydrobiliverdin:ferredoxin oxidoreductase (249 aa).

Belongs to the HY2 family.

The enzyme catalyses 15,16-dihydrobiliverdin + oxidized 2[4Fe-4S]-[ferredoxin] = biliverdin IXalpha + reduced 2[4Fe-4S]-[ferredoxin] + 2 H(+). Functionally, catalyzes the two-electron reduction of biliverdin IX-alpha at the C15 methine bridge. The protein is 15,16-dihydrobiliverdin:ferredoxin oxidoreductase of Prochlorococcus marinus (strain MIT 9303).